Reading from the N-terminus, the 456-residue chain is Exodeoxyribonuclease 7 large subunit (456 aa).

This sequence belongs to the XseA family. Heterooligomer composed of large and small subunits.

The protein resides in the cytoplasm. The catalysed reaction is Exonucleolytic cleavage in either 5'- to 3'- or 3'- to 5'-direction to yield nucleoside 5'-phosphates.. In terms of biological role, bidirectionally degrades single-stranded DNA into large acid-insoluble oligonucleotides, which are then degraded further into small acid-soluble oligonucleotides. The polypeptide is Exodeoxyribonuclease 7 large subunit (Lactobacillus delbrueckii subsp. bulgaricus (strain ATCC BAA-365 / Lb-18)).